The chain runs to 156 residues: Crossover junction endodeoxyribonuclease RuvC (156 aa).

Catalysis depends on residues Asp-7, Glu-67, and Asp-139. The Mg(2+) site is built by Asp-7, Glu-67, and Asp-139.

This sequence belongs to the RuvC family. In terms of assembly, homodimer which binds Holliday junction (HJ) DNA. The HJ becomes 2-fold symmetrical on binding to RuvC with unstacked arms; it has a different conformation from HJ DNA in complex with RuvA. In the full resolvosome a probable DNA-RuvA(4)-RuvB(12)-RuvC(2) complex forms which resolves the HJ. Mg(2+) serves as cofactor.

The protein resides in the cytoplasm. The catalysed reaction is Endonucleolytic cleavage at a junction such as a reciprocal single-stranded crossover between two homologous DNA duplexes (Holliday junction).. In terms of biological role, the RuvA-RuvB-RuvC complex processes Holliday junction (HJ) DNA during genetic recombination and DNA repair. Endonuclease that resolves HJ intermediates. Cleaves cruciform DNA by making single-stranded nicks across the HJ at symmetrical positions within the homologous arms, yielding a 5'-phosphate and a 3'-hydroxyl group; requires a central core of homology in the junction. The consensus cleavage sequence is 5'-(A/T)TT(C/G)-3'. Cleavage occurs on the 3'-side of the TT dinucleotide at the point of strand exchange. HJ branch migration catalyzed by RuvA-RuvB allows RuvC to scan DNA until it finds its consensus sequence, where it cleaves and resolves the cruciform DNA. This chain is Crossover junction endodeoxyribonuclease RuvC, found in Sphingopyxis alaskensis (strain DSM 13593 / LMG 18877 / RB2256) (Sphingomonas alaskensis).